A 98-amino-acid polypeptide reads, in one-letter code: MPIIYMNIMLAFTISLLGMLTYRSHLMSSLLCLEGMMLSLFIMSTLMALNMHFPLANIVPIALLVFAACEAAVGLSLLISISNTYGLDHIHNLSLLQC.

Transmembrane regions (helical) follow at residues 1 to 21 (MPII…GMLT), 29 to 49 (SLLC…LMAL), and 58 to 78 (IVPI…LSLL).

This sequence belongs to the complex I subunit 4L family. As to quaternary structure, core subunit of respiratory chain NADH dehydrogenase (Complex I) which is composed of 45 different subunits.

The protein localises to the mitochondrion inner membrane. The catalysed reaction is a ubiquinone + NADH + 5 H(+)(in) = a ubiquinol + NAD(+) + 4 H(+)(out). In terms of biological role, core subunit of the mitochondrial membrane respiratory chain NADH dehydrogenase (Complex I) which catalyzes electron transfer from NADH through the respiratory chain, using ubiquinone as an electron acceptor. Part of the enzyme membrane arm which is embedded in the lipid bilayer and involved in proton translocation. This chain is NADH-ubiquinone oxidoreductase chain 4L (MT-ND4L), found in Presbytis melalophos (Mitred leaf monkey).